The chain runs to 188 residues: Probable nicotinate-nucleotide adenylyltransferase (188 aa).

The protein belongs to the NadD family.

It carries out the reaction nicotinate beta-D-ribonucleotide + ATP + H(+) = deamido-NAD(+) + diphosphate. It participates in cofactor biosynthesis; NAD(+) biosynthesis; deamido-NAD(+) from nicotinate D-ribonucleotide: step 1/1. Catalyzes the reversible adenylation of nicotinate mononucleotide (NaMN) to nicotinic acid adenine dinucleotide (NaAD). This is Probable nicotinate-nucleotide adenylyltransferase from Solibacter usitatus (strain Ellin6076).